The chain runs to 125 residues: Ribosome-binding factor A (125 aa).

This sequence belongs to the RbfA family. As to quaternary structure, monomer. Binds 30S ribosomal subunits, but not 50S ribosomal subunits or 70S ribosomes.

It is found in the cytoplasm. Functionally, one of several proteins that assist in the late maturation steps of the functional core of the 30S ribosomal subunit. Associates with free 30S ribosomal subunits (but not with 30S subunits that are part of 70S ribosomes or polysomes). Required for efficient processing of 16S rRNA. May interact with the 5'-terminal helix region of 16S rRNA. This is Ribosome-binding factor A from Fervidobacterium nodosum (strain ATCC 35602 / DSM 5306 / Rt17-B1).